The following is a 1012-amino-acid chain: MDPPSPSRASQTQPVAPSPLTSYRWHSGGGAEKGAGGFRWGRLAGWGRAQSHQETTASSQPAPRSLFRRVLSAPPKESRTSRLKISKSLWGKNKSPPLDSEPEPENPEPEPELEPLATQIPEAPTPDVPVWNIEAFTLLDGKLVLLGNEDEGPRQPRMGSASSESSIHVASGNLKDPDRTPGKTDPEAAGPHQIHNVRGLLKRLKEKKKAKSELGASASRDGPPSALGSRESLATISELDLGAERDVRVWPLHPSLLEEPHCFQVTWAGGSRCFSCRSAAERDRWIEDLRRHFQPSQDNVEREETWLSVWVHEVKGLPRAAAAAPGVRTELWLDGALLARTTPRAGPGQLFWAERFHFEALPPARRLSLRLRGAGPGDAVLGRVALALEELGIPRAPAAGLERWFPLLGAPAGAALRARIRARRLRVLPSERYKELAEFLTFHYARLCGALELALSAQAKEELAAAMVRVLRATGRAQALVTDLGTAELARSGGREALLFRENTLATKAIDEYMKLVAQDYLQETLGQVVRRLCASTEDCEVDPSKCPASDLPQHQSRLRNSCKEVFENIIHSYNWFPAELGTVFSGWREACKARGSEALGPRLVCASLFLRLLCPAILSPSLFGLALEHPAPGPARTLTLIAKVIQNLANRAPFGEKEAYMSFMNTFLEDHGPAMQHFLDQVATVDADTAPSGYQGSSDLALQLAVLHAQLCTIFAELDQATRDNLEPLPTILHAIEEGRPVPVTVPMCLPAPRTQGHSSISAGEKPGFLAPRDLPKHTPLISKSQSLRSVHGAGSWARPRLEEEQPPRLPRPVKRTQSVPAGRPARRRPSAGPRPRPKGSLHAGPAPRGRPWTGASASLPRKPSVPWQRQMDQPRDKDQALGTHRPVGKLAELQCEVAALRQDLKMLSGLVESLSTHIRSLSEQQEQLRTQLQLLDSRLREGTAKLDPGRDRSTNEGHRLKSLECRLAEIESTQAQLKDTIQNLQLLPRTSESQSQPVPLKAPCINGDTT.

Disordered regions lie at residues 1 to 128 (MDPP…TPDV), 147 to 196 (GNED…QIHN), and 208 to 229 (KKAK…ALGS). The span at 7-21 (SRASQTQPVAPSPLT) shows a compositional bias: polar residues. Residue S18 is modified to Phosphoserine. Gly residues predominate over residues 27 to 39 (SGGGAEKGAGGFR). The span at 50-62 (QSHQETTASSQPA) shows a compositional bias: polar residues. Phosphoserine is present on S51. Acidic residues predominate over residues 100 to 113 (SEPEPENPEPEPEL). 4 positions are modified to phosphoserine: S160, S162, S163, and S166. Over residues 160 to 171 (SASSESSIHVAS) the composition is skewed to low complexity. Positions 175 to 186 (KDPDRTPGKTDP) are enriched in basic and acidic residues. Residues 193–294 (QIHNVRGLLK…WIEDLRRHFQ (102 aa)) enclose the PH domain. S212, S225, S229, and S232 each carry phosphoserine. The residue at position 235 (T235) is a Phosphothreonine. The region spanning 285 to 405 (WIEDLRRHFQ…APAAGLERWF (121 aa)) is the C2 domain. In terms of domain architecture, Ras-GAP spans 475-683 (GRAQALVTDL…PAMQHFLDQV (209 aa)). Positions 752-887 (PAPRTQGHSS…DKDQALGTHR (136 aa)) are disordered. Phosphoserine is present on residues S788 and S791. A compositionally biased stretch (basic residues) spans 826 to 841 (PARRRPSAGPRPRPKG). Positions 889–989 (VGKLAELQCE…KDTIQNLQLL (101 aa)) form a coiled coil. The span at 990–999 (PRTSESQSQP) shows a compositional bias: polar residues. The interval 990-1012 (PRTSESQSQPVPLKAPCINGDTT) is disordered.

It localises to the cytoplasm. It is found in the cell cortex. Its function is as follows. Functions as a Ras GTPase-activating protein. Plays an important role in the expansion and functions of natural killer T (NKT) cells in the liver by negatively regulating RAS activity and the down-stream ERK signaling pathway. The sequence is that of RAS protein activator like-3 (RASAL3) from Bos taurus (Bovine).